Consider the following 267-residue polypeptide: 4-hydroxy-tetrahydrodipicolinate reductase (267 aa).

NAD(+)-binding positions include 8–13 (GAAGRM) and glutamate 34. Arginine 35 contributes to the NADP(+) binding site. Residues 98–100 (GST) and 122–125 (APNM) contribute to the NAD(+) site. Histidine 155 (proton donor/acceptor) is an active-site residue. Histidine 156 serves as a coordination point for (S)-2,3,4,5-tetrahydrodipicolinate. Residue lysine 159 is the Proton donor of the active site. 165–166 (GT) contacts (S)-2,3,4,5-tetrahydrodipicolinate.

Belongs to the DapB family.

It localises to the cytoplasm. The enzyme catalyses (S)-2,3,4,5-tetrahydrodipicolinate + NAD(+) + H2O = (2S,4S)-4-hydroxy-2,3,4,5-tetrahydrodipicolinate + NADH + H(+). It carries out the reaction (S)-2,3,4,5-tetrahydrodipicolinate + NADP(+) + H2O = (2S,4S)-4-hydroxy-2,3,4,5-tetrahydrodipicolinate + NADPH + H(+). It participates in amino-acid biosynthesis; L-lysine biosynthesis via DAP pathway; (S)-tetrahydrodipicolinate from L-aspartate: step 4/4. Functionally, catalyzes the conversion of 4-hydroxy-tetrahydrodipicolinate (HTPA) to tetrahydrodipicolinate. This is 4-hydroxy-tetrahydrodipicolinate reductase from Geobacter sp. (strain M21).